We begin with the raw amino-acid sequence, 340 residues long: Probable allantoicase (340 aa).

This sequence belongs to the allantoicase family.

It carries out the reaction allantoate + H2O = (S)-ureidoglycolate + urea. It participates in nitrogen metabolism; (S)-allantoin degradation; (S)-ureidoglycolate from allantoate (aminidohydrolase route): step 1/1. This is Probable allantoicase from Rhizobium meliloti (strain 1021) (Ensifer meliloti).